The primary structure comprises 186 residues: Ribosome-recycling factor (186 aa).

This sequence belongs to the RRF family.

The protein localises to the cytoplasm. Functionally, responsible for the release of ribosomes from messenger RNA at the termination of protein biosynthesis. May increase the efficiency of translation by recycling ribosomes from one round of translation to another. This Allorhizobium ampelinum (strain ATCC BAA-846 / DSM 112012 / S4) (Agrobacterium vitis (strain S4)) protein is Ribosome-recycling factor.